The sequence spans 292 residues: 33 kDa chaperonin (292 aa).

Intrachain disulfides connect Cys230–Cys232 and Cys263–Cys266.

This sequence belongs to the HSP33 family. Under oxidizing conditions two disulfide bonds are formed involving the reactive cysteines. Under reducing conditions zinc is bound to the reactive cysteines and the protein is inactive.

It localises to the cytoplasm. Functionally, redox regulated molecular chaperone. Protects both thermally unfolding and oxidatively damaged proteins from irreversible aggregation. Plays an important role in the bacterial defense system toward oxidative stress. In Salmonella typhi, this protein is 33 kDa chaperonin.